A 72-amino-acid polypeptide reads, in one-letter code: Large ribosomal subunit protein bL28 (72 aa).

The protein belongs to the bacterial ribosomal protein bL28 family.

The protein is Large ribosomal subunit protein bL28 of Pelodictyon phaeoclathratiforme (strain DSM 5477 / BU-1).